The sequence spans 130 residues: UPF0225 protein DR_0483 (130 aa).

Belongs to the UPF0225 family.

The sequence is that of UPF0225 protein DR_0483 from Deinococcus radiodurans (strain ATCC 13939 / DSM 20539 / JCM 16871 / CCUG 27074 / LMG 4051 / NBRC 15346 / NCIMB 9279 / VKM B-1422 / R1).